Here is a 311-residue protein sequence, read N- to C-terminus: Porphobilinogen deaminase (311 aa).

S-(dipyrrolylmethanemethyl)cysteine is present on cysteine 245.

It belongs to the HMBS family. In terms of assembly, monomer. It depends on dipyrromethane as a cofactor.

The catalysed reaction is 4 porphobilinogen + H2O = hydroxymethylbilane + 4 NH4(+). Its pathway is porphyrin-containing compound metabolism; protoporphyrin-IX biosynthesis; coproporphyrinogen-III from 5-aminolevulinate: step 2/4. Functionally, tetrapolymerization of the monopyrrole PBG into the hydroxymethylbilane pre-uroporphyrinogen in several discrete steps. This chain is Porphobilinogen deaminase, found in Deinococcus deserti (strain DSM 17065 / CIP 109153 / LMG 22923 / VCD115).